We begin with the raw amino-acid sequence, 173 residues long: Crossover junction endodeoxyribonuclease RuvC (173 aa).

Catalysis depends on residues Asp-8, Glu-67, and Asp-139. Residues Asp-8, Glu-67, and Asp-139 each coordinate Mg(2+).

The protein belongs to the RuvC family. In terms of assembly, homodimer which binds Holliday junction (HJ) DNA. The HJ becomes 2-fold symmetrical on binding to RuvC with unstacked arms; it has a different conformation from HJ DNA in complex with RuvA. In the full resolvosome a probable DNA-RuvA(4)-RuvB(12)-RuvC(2) complex forms which resolves the HJ. Mg(2+) serves as cofactor.

The protein resides in the cytoplasm. It catalyses the reaction Endonucleolytic cleavage at a junction such as a reciprocal single-stranded crossover between two homologous DNA duplexes (Holliday junction).. The RuvA-RuvB-RuvC complex processes Holliday junction (HJ) DNA during genetic recombination and DNA repair. Endonuclease that resolves HJ intermediates. Cleaves cruciform DNA by making single-stranded nicks across the HJ at symmetrical positions within the homologous arms, yielding a 5'-phosphate and a 3'-hydroxyl group; requires a central core of homology in the junction. The consensus cleavage sequence is 5'-(A/T)TT(C/G)-3'. Cleavage occurs on the 3'-side of the TT dinucleotide at the point of strand exchange. HJ branch migration catalyzed by RuvA-RuvB allows RuvC to scan DNA until it finds its consensus sequence, where it cleaves and resolves the cruciform DNA. This is Crossover junction endodeoxyribonuclease RuvC from Vibrio atlanticus (strain LGP32) (Vibrio splendidus (strain Mel32)).